Here is an 800-residue protein sequence, read N- to C-terminus: Nuclear cap-binding protein subunit 1 (800 aa).

The segment at 1–26 (MSRRRAHDTEDEGYDHRRNKRRRVSE) is disordered. A Phosphothreonine modification is found at threonine 9. The MIF4G domain occupies 31–243 (EDRLESLILR…CLWAQIRKLR (213 aa)). Positions 669-700 (LAKADSSSSDSEDDSSHKRKKPITHADKPSEE) are disordered.

Belongs to the NCBP1 family. As to quaternary structure, component of the nuclear cap-binding complex (CBC), a heterodimer composed of Cbp80 and Cbp20 that interacts with m7GpppG-capped RNA.

The protein localises to the nucleus. Its function is as follows. Component of the cap-binding complex (CBC), which binds cotranscriptionally to the 5'-cap of pre-mRNAs and is involved in various processes such as pre-mRNA splicing and RNA-mediated gene silencing (RNAi). The CBC complex is involved in miRNA-mediated RNA interference via its interaction with Ars2 and is required for primary microRNAs (miRNAs) processing. Also involved in innate immunity via the short interfering RNAs (siRNAs) processing machinery by restricting the viral RNA production. In the CBC complex, Cbp80 does not bind directly capped RNAs (m7GpppG-capped RNA) but is required to stabilize the movement of the N-terminal loop of Cbp20 and lock the CBC into a high affinity cap-binding state with the cap structure. The chain is Nuclear cap-binding protein subunit 1 (Cbp80) from Drosophila melanogaster (Fruit fly).